A 1993-amino-acid polypeptide reads, in one-letter code: Otoferlin (1993 aa).

In terms of domain architecture, C2 1 spans 1 to 98 (MALIVHLKTV…VEENRVEVSD (98 aa)). Over 1–1959 (MALIVHLKTV…IKYLICTRYK (1959 aa)) the chain is Cytoplasmic. A disordered region spans residues 127 to 212 (PWDDGDFLGD…KEEPQRQDEP (86 aa)). Over residues 129-145 (DDGDFLGDESLQEEEKD) the composition is skewed to acidic residues. 2 stretches are compositionally biased toward basic and acidic residues: residues 163–186 (PGEK…EHKA) and 202–211 (HKEEPQRQDE). 2 consecutive C2 domains span residues 251–372 (KRSK…HKWA) and 415–546 (IEGN…FLPT). Residues 654–708 (NYGNEVDGTSRPQRPRPRKEPGDEEEVDLIQNSSDDEGDEAGDLASVSSTPPMRP) are disordered. Residues 675–695 (GDEEEVDLIQNSSDDEGDEAG) show a composition bias toward acidic residues. Positions 807–836 (RERLKSCMRELESMGQQAKSLRAQVKRHTV) form a coiled coil. C2 domains are found at residues 959–1084 (LHSF…PPRF) and 1131–1257 (RGPI…ANWN). 5 residues coordinate Ca(2+): Asp991, Asp997, Asp1053, Asp1055, and Asp1061. Disordered stretches follow at residues 1294–1318 (AEDE…EEPD) and 1339–1398 (LRQH…EKKK). Acidic residues predominate over residues 1348–1357 (DLEEKEEMDS). The segment covering 1366 to 1379 (KNKEKSRAAKEEKK) has biased composition (basic and acidic residues). C2 domains lie at 1460 to 1589 (LPED…ATCG) and 1710 to 1861 (DMPA…KQCT). Ca(2+)-binding residues include Asp1504, Asp1510, Asp1559, Asp1561, Asp1567, Asp1832, Ser1835, and Asp1838. Residues 1960–1980 (WLIIKIVLALLGLLMLALFLY) traverse the membrane as a helical segment. The Extracellular portion of the chain corresponds to 1981 to 1993 (SLPGYMVKKLLGA).

This sequence belongs to the ferlin family. Interacts with SNAP25; the interaction is direct. Interacts with STX1; the interaction is direct. Interacts with RAB8B. The cofactor is Ca(2+). As to expression, isoform 1 is expressed in the cochlea and brain. Expressed in cerebellum (Purkinje cells), hippocampus (granule cells of the dentate gyrus and in pyramidal cells of the CA1-CA3 region) and cortex (stellate and pyramidal cells). Expressed in hair cells of vestibular organs such as the saccule, utricle and crista ampullari. Expressed in the cochlear inner and outer cells (IHCs and OHCs) (at protein level). Expressed in brain: brainstem, cerebellum (granules cells and Purkinje cell layer), cortex (layers IV and V), inferior colliculus, superior colliculus and hippocampus (granule cells of the dentate gyrus and in pyramidal cells of the CA1-CA3 region).

Its subcellular location is the cytoplasmic vesicle. The protein resides in the secretory vesicle. It localises to the synaptic vesicle membrane. It is found in the basolateral cell membrane. The protein localises to the endoplasmic reticulum membrane. Its subcellular location is the golgi apparatus membrane. The protein resides in the presynaptic cell membrane. It localises to the cell membrane. In terms of biological role, key calcium ion sensor involved in the Ca(2+)-triggered synaptic vesicle-plasma membrane fusion and in the control of neurotransmitter release at these output synapses. Interacts in a calcium-dependent manner to the presynaptic SNARE proteins at ribbon synapses of cochlear inner hair cells (IHCs) to trigger exocytosis of neurotransmitter. Also essential to synaptic exocytosis in immature outer hair cells (OHCs). May also play a role within the recycling of endosomes. This chain is Otoferlin (Otof), found in Rattus norvegicus (Rat).